Consider the following 780-residue polypeptide: MLPNNQWQIPINNGLTHQENMAAHAAVMKLRVHDLQSIISQLSLRKPRPQKSEHQKVVVESLRDPHHARQIYQMASNFPNGNYEMQKRPATTSQVRSHPYVLPSRSGASNHLVNHHYQQQQQQQPQPHNLLHQQMMASHHSHLQQQHHPSTVRWLTPELLEEQLRGSMRYGAPAAAAATNAPLHSSFPNHGRSSQQSLQKSEKSNRPKKMYADNFEPLPLPFYDVISVLLKPVELHSSDSPTLKQTKQLQFPFLLTAEHISKISYRADVTPLPRYELQLRFFNLTEPVQGPQKDDFPLNCYARVDDSVVQLPNVIPTNKTNAEPKRPSRPVNITSNMNRYKKEHTVAVEWLADKRVWAAGVYFVHRVNSDILFKRLNQNVSRHRSLEVTKQEVIKKLSGGEDDIAMDRLNISLLDPLCKTRMTTPSRCQDCTHLQCFDLLSYLMMNEKKPTWQCPVCSSNCPYDRLIVDDYFLDMLAKVDKNTTEVELKEDGSYDVIKEEAFCISDDDDDDVVPATVNGTASCSSTNGNGLANEAAKKKPADDDIITLSDDDDEELNRGIMNSLNDSFSPGRHTASAELAAQKTPPQQKKKTKDDDIEIITLDDTPPRPVAASANLPMRQMSQQNQMPVGSSPSGMASTQMGMNEGASKTIRDALNKIGEQSANSSTQSSPLVQLHHTTHPLNFAQSSYMNPSSGSQTPTSQYGYSPMINQAPHFQMQNGLIGRNNQMVHMQQHHLQQQQQQQQSPQIMSPSFYAQQQMSNGGAFAYYPPQYPQQQYRQN.

The tract at residues A181–M210 is disordered. The PINIT domain maps to K203–V367. The segment at G400 to E485 adopts an SP-RING-type zinc-finger fold. Zn(2+)-binding residues include C431, H433, C454, and C457. Positions G519 to G530 are enriched in polar residues. Disordered stretches follow at residues G519–D544, I560–D594, and Q732–A755. Residues Q732 to M749 are compositionally biased toward low complexity.

The protein belongs to the PIAS family. In terms of assembly, may interact with gex-3.

Its pathway is protein modification; protein sumoylation. Its function is as follows. Functions as an E3-type smo-1 ligase. Mediates smo-1 conjugation to air-2 in vitro and is required for proper chromosome alignment. In the early embryo, specifically suppresses checkpoint activation in response to DNA damage, maybe by promoting mus-101 sumoylation. In embryos, plays a role in determining telomere localization in the nucleus. Acts with pie-1 to promote piRNA-mediated silencing and fertility in the adult germline. This Caenorhabditis elegans protein is E3 SUMO-protein ligase gei-17.